We begin with the raw amino-acid sequence, 283 residues long: Non-selective voltage-gated ion channel VDAC1 (283 aa).

Ala-2 carries the post-translational modification N-acetylalanine. Lys-12 contacts ATP. Lys-12 is covalently cross-linked (Glycyl lysine isopeptide (Lys-Gly) (interchain with G-Cter in ubiquitin)). Residue Ser-13 is modified to Phosphoserine. Thr-19 is modified (phosphothreonine). Residue Lys-20 coordinates ATP. Residue Lys-20 is modified to N6-acetyllysine; alternate. Lys-20 carries the post-translational modification N6-succinyllysine; alternate. A Glycyl lysine isopeptide (Lys-Gly) (interchain with G-Cter in ubiquitin); alternate cross-link involves residue Lys-20. 2 beta stranded membrane-spanning segments follow: residues 26-35 and 39-47; these read LIKLDLKTKS and LEFTSSGSA. Glycyl lysine isopeptide (Lys-Gly) (interchain with G-Cter in ubiquitin) cross-links involve residues Lys-53 and Lys-61. Residues 54 to 64 traverse the membrane as a beta stranded segment; that stretch reads VTGSLETKYRW. Phosphotyrosine is present on Tyr-67. A run of 3 beta stranded transmembrane segments spans residues 69–76, 80–89, and 95–104; these read LTFTEKWN, TLGTEITVED, and LKLTFDSSFS. Thr-107 carries the post-translational modification Phosphothreonine. Position 109 is an N6-acetyllysine; alternate (Lys-109). Lys-109 is covalently cross-linked (Glycyl lysine isopeptide (Lys-Gly) (interchain with G-Cter in ubiquitin); alternate). A Glycyl lysine isopeptide (Lys-Gly) (interchain with G-Cter in ubiquitin) cross-link involves residue Lys-110. Beta stranded transmembrane passes span 111-120, 123-130, 137-145, and 150-158; these read NAKIKTGYKR, INLGCDMD, SIRGALVLG, and LAGYQMNFE. Lys-161 participates in a covalent cross-link: Glycyl lysine isopeptide (Lys-Gly) (interchain with G-Cter in ubiquitin). Transmembrane regions (beta stranded) follow at residues 163-175, 178-185, 189-198, 202-211, 218-227, and 231-238; these read RVTQSNFAVGYKT, FQLHTNVN, EFGGSIYQKV, LETAVNLAWT, RFGIAAKYQI, and ACFSAKVN. Phosphoserine; by NEK1 is present on Ser-193. Residue Ser-240 is modified to Phosphoserine. 242–244 contributes to the NAD(+) binding site; the sequence is LIG. Residues 242–251 traverse the membrane as a beta stranded segment; sequence LIGLGYTQTL. Lys-252 carries the N6-acetyllysine modification. A beta stranded membrane pass occupies residues 254-263; sequence GIKLTLSALL. 260–264 provides a ligand contact to NAD(+); that stretch reads SALLD. Residue Lys-266 is modified to N6-acetyllysine; alternate. Residue Lys-266 forms a Glycyl lysine isopeptide (Lys-Gly) (interchain with G-Cter in ubiquitin); alternate linkage. A beta stranded transmembrane segment spans residues 273–282; that stretch reads HKLGLGLEFQ. Lys-274 is covalently cross-linked (Glycyl lysine isopeptide (Lys-Gly) (interchain with G-Cter in ubiquitin)).

It belongs to the eukaryotic mitochondrial porin family. In terms of assembly, homodimer and homotrimer; in response to cyclic AMP or calcium; oligomerization is required for scramblase activity. Component of the mitochondrial permeability transition pore complex (mPTPC), at least composed of SPG7, VDAC1 and PPIF. Interacts with SPG7, NIPSNAP2 and SLC25A30. Interacts with hexokinases including HK1. The HK1-VDAC1 complex interacts with ATF2. Interacts with BCL2L1. Interacts with BAK1. Interacts with RTL10/BOP (via BH3 domain). Interacts with amyloid-beta and APP; induces VDAC1 dephosphorylation. Interacts with TMEM41B. Interacts with BCAP31. Interacts with HSPA9; this interaction couples ITPR1 to VDAC1. (Microbial infection) Interacts with influenza A virus PB1-F2 protein. Post-translationally, phosphorylation at Ser-193 by NEK1 promotes the closed conformational state preventing excessive mitochondrial membrane permeability and subsequent apoptotic cell death after injury. Phosphorylation by the AKT-GSK3B axis stabilizes the protein probably by preventing ubiquitin-mediated proteasomal degradation. In terms of processing, ubiquitinated. Undergoes monoubiquitination and polyubiquitination by PRKN; monoubiquitination at Lys-274 inhibits apoptosis, whereas polyubiquitination leads to its degradation and promotes mitophagy. Deubiquitinated by USP30. Expressed in erythrocytes (at protein level). Expressed in heart, liver and skeletal muscle.

The protein resides in the mitochondrion outer membrane. The protein localises to the cell membrane. Its subcellular location is the membrane raft. It carries out the reaction chloride(in) = chloride(out). It catalyses the reaction K(+)(in) = K(+)(out). The enzyme catalyses ATP(in) = ATP(out). The catalysed reaction is Ca(2+)(in) = Ca(2+)(out). It carries out the reaction Na(+)(in) = Na(+)(out). It catalyses the reaction Mg(2+)(in) = Mg(2+)(out). The enzyme catalyses L-glutamate(out) = L-glutamate(in). The catalysed reaction is dopamine(out) = dopamine(in). It carries out the reaction acetylcholine(in) = acetylcholine(out). It catalyses the reaction Fe(III)-[cytochrome c](out) = Fe(III)-[cytochrome c](in). The enzyme catalyses a 1,2-diacyl-sn-glycero-3-phosphocholine(in) = a 1,2-diacyl-sn-glycero-3-phosphocholine(out). The catalysed reaction is a 1,2-diacyl-sn-glycero-3-phospho-L-serine(in) = a 1,2-diacyl-sn-glycero-3-phospho-L-serine(out). With respect to regulation, inhibited by nitric oxide. Its function is as follows. Non-selective voltage-gated ion channel that mediates the transport of anions and cations through the mitochondrion outer membrane and plasma membrane. The channel at the outer mitochondrial membrane allows diffusion of small hydrophilic molecules; in the plasma membrane it is involved in cell volume regulation and apoptosis. It adopts an open conformation at low or zero membrane potential and a closed conformation at potentials above 30-40 mV. The open state has a weak anion selectivity whereas the closed state is cation-selective. Binds various signaling molecules, including the sphingolipid ceramide, the phospholipid phosphatidylcholine, and the sterols cholesterol and oxysterol. In depolarized mitochondria, acts downstream of PRKN and PINK1 to promote mitophagy or prevent apoptosis; polyubiquitination by PRKN promotes mitophagy, while monoubiquitination by PRKN decreases mitochondrial calcium influx which ultimately inhibits apoptosis. May participate in the formation of the permeability transition pore complex (PTPC) responsible for the release of mitochondrial products that triggers apoptosis. May mediate ATP export from cells. Part of a complex composed of HSPA9, ITPR1 and VDAC1 that regulates mitochondrial calcium-dependent apoptosis by facilitating calcium transport from the ER lumen to the mitochondria intermembrane space thus providing calcium for the downstream calcium channel MCU that directly releases it into mitochondria matrix. Mediates cytochrome c efflux. In terms of biological role, catalyzes the scrambling of phospholipids across the outer mitochondrial membrane; the mechanism is unrelated to channel activity and is capable of translocating both anionic and zwitterionic phospholipids. This is Non-selective voltage-gated ion channel VDAC1 from Homo sapiens (Human).